The following is a 356-amino-acid chain: Replication factor C subunit 3 (356 aa).

An N6-acetyllysine modification is found at Lys-20. Phosphoserine is present on Ser-125.

It belongs to the activator 1 small subunits family. Subunit of the RFC complex, an heteropentameric complex consisting of a large subunit RFC1 and four small subunits RFC2, RFC3, RFC4 and RFC5; the RFC complex interacts with PCNA. Forms an heterotetrameric complex with RFC2, RFC4 and RFC5; this complex has ATPase activity but is not stimulated by PCNA. The heterotetramer of subunits RFC2, RFC3, RFC4 and RFC5 interacts with RAD17. Interacts with CNTD1; this interaction facilitates crossover formation.

It is found in the nucleus. Subunit of the replication factor C (RFC) complex which acts during elongation of primed DNA templates by DNA polymerases delta and epsilon, and is necessary for ATP-dependent loading of proliferating cell nuclear antigen (PCNA) onto primed DNA. The sequence is that of Replication factor C subunit 3 (RFC3) from Homo sapiens (Human).